The chain runs to 86 residues: Electron transfer flavoprotein regulatory factor 1 (86 aa).

This sequence belongs to the complex I LYR family.

It localises to the mitochondrion. Its function is as follows. Acts as a regulator of the electron transfer flavoprotein by promoting the removal of flavin from the ETF holoenzyme (composed of ETFA and ETFB). In Taeniopygia guttata (Zebra finch), this protein is Electron transfer flavoprotein regulatory factor 1.